We begin with the raw amino-acid sequence, 351 residues long: Dihydroorotate dehydrogenase (quinone) (351 aa).

FMN is bound by residues 61–65 and threonine 85; that span reads AGLDK. Lysine 65 contacts substrate. A substrate-binding site is contributed by 110–114; it reads NRMGF. Asparagine 139 and asparagine 172 together coordinate FMN. Asparagine 172 is a substrate binding site. Catalysis depends on serine 175, which acts as the Nucleophile. A substrate-binding site is contributed by asparagine 177. FMN contacts are provided by lysine 217 and threonine 245. 246–247 serves as a coordination point for substrate; sequence NT. FMN-binding positions include glycine 268, glycine 297, and 318–319; that span reads YS.

It belongs to the dihydroorotate dehydrogenase family. Type 2 subfamily. As to quaternary structure, monomer. Requires FMN as cofactor.

The protein localises to the cell membrane. The catalysed reaction is (S)-dihydroorotate + a quinone = orotate + a quinol. It functions in the pathway pyrimidine metabolism; UMP biosynthesis via de novo pathway; orotate from (S)-dihydroorotate (quinone route): step 1/1. Functionally, catalyzes the conversion of dihydroorotate to orotate with quinone as electron acceptor. The sequence is that of Dihydroorotate dehydrogenase (quinone) from Stenotrophomonas maltophilia (strain R551-3).